A 415-amino-acid polypeptide reads, in one-letter code: Gamma-glutamyl phosphate reductase (415 aa).

The protein belongs to the gamma-glutamyl phosphate reductase family.

It localises to the cytoplasm. It carries out the reaction L-glutamate 5-semialdehyde + phosphate + NADP(+) = L-glutamyl 5-phosphate + NADPH + H(+). It functions in the pathway amino-acid biosynthesis; L-proline biosynthesis; L-glutamate 5-semialdehyde from L-glutamate: step 2/2. Functionally, catalyzes the NADPH-dependent reduction of L-glutamate 5-phosphate into L-glutamate 5-semialdehyde and phosphate. The product spontaneously undergoes cyclization to form 1-pyrroline-5-carboxylate. The sequence is that of Gamma-glutamyl phosphate reductase from Clostridium perfringens (strain 13 / Type A).